The chain runs to 1183 residues: DNA-directed RNA polymerase subunit beta (1183 aa).

This sequence belongs to the RNA polymerase beta chain family. The RNAP catalytic core consists of 2 alpha, 1 beta, 1 beta' and 1 omega subunit. When a sigma factor is associated with the core the holoenzyme is formed, which can initiate transcription.

The enzyme catalyses RNA(n) + a ribonucleoside 5'-triphosphate = RNA(n+1) + diphosphate. In terms of biological role, DNA-dependent RNA polymerase catalyzes the transcription of DNA into RNA using the four ribonucleoside triphosphates as substrates. This chain is DNA-directed RNA polymerase subunit beta, found in Staphylococcus aureus (strain COL).